Consider the following 348-residue polypeptide: UDP-N-acetyl-alpha-D-glucosaminouronate 4-epimerase (348 aa).

NAD(+) contacts are provided by F26, I27, D46, T50, G51, D77, I78, Q97, Y165, K169, and V195. Y165 (proton acceptor) is an active-site residue.

It belongs to the NAD(P)-dependent epimerase/dehydratase family. As to quaternary structure, homodimer. It depends on NAD(+) as a cofactor.

The enzyme catalyses UDP-2-acetamido-2-deoxy-alpha-D-glucuronate = UDP-2-acetamido-2-deoxy-alpha-D-galacturonate. It catalyses the reaction UDP-N-acetyl-alpha-D-glucosamine = UDP-N-acetyl-alpha-D-galactosamine. It functions in the pathway capsule biogenesis; capsule polysaccharide biosynthesis. Its pathway is glycan metabolism; Vi-antigen biosynthesis. Its function is as follows. Epimerase required for the biosynthesis of the capsular polysaccharide, commonly referred as the Vi antigen, an important virulence factor. Catalyzes the reversible epimerization of UDP-N-acetylglucosaminuronic acid (UDP-GlcNAcA) to UDP-N-acetylgalactosaminuronic acid (UDP-GalNAcA). Also catalyzes, with lower efficiency, the reversible epimerization of UDP-N-acetylglucosamine (UDP-GlcNAc) to UDP-N-acetylgalactosamine (UDP-GalNAc). Cannot use UDP-glucose (UDP-Glc) and UDP-galactose (UDP-Gal) as substrates. The protein is UDP-N-acetyl-alpha-D-glucosaminouronate 4-epimerase of Salmonella typhi.